Here is a 185-residue protein sequence, read N- to C-terminus: Small ribosomal subunit protein uS4 (185 aa).

Residues 107-179 (RRLQTLVYRK…NGRRKRKNNH (73 aa)) enclose the S4 RNA-binding domain. The segment at 161–185 (NTPLTNPEINGRRKRKNNHAGKEDN) is disordered.

The protein belongs to the universal ribosomal protein uS4 family.

This chain is Small ribosomal subunit protein uS4, found in Entamoeba histolytica (strain ATCC 30459 / HM-1:IMSS / ABRM).